Reading from the N-terminus, the 302-residue chain is Pyridoxal 5'-phosphate synthase subunit PdxS (302 aa).

A D-ribose 5-phosphate-binding site is contributed by D32. K89 serves as the catalytic Schiff-base intermediate with D-ribose 5-phosphate. G161 contacts D-ribose 5-phosphate. Position 173 (R173) interacts with D-glyceraldehyde 3-phosphate. D-ribose 5-phosphate is bound by residues G222 and 243-244 (GS). The tract at residues 275–302 (IAKNPGKGMKGQANADLDEEEQLQGRGV) is disordered.

It belongs to the PdxS/SNZ family. In the presence of PdxT, forms a dodecamer of heterodimers.

It carries out the reaction aldehydo-D-ribose 5-phosphate + D-glyceraldehyde 3-phosphate + L-glutamine = pyridoxal 5'-phosphate + L-glutamate + phosphate + 3 H2O + H(+). It functions in the pathway cofactor biosynthesis; pyridoxal 5'-phosphate biosynthesis. Catalyzes the formation of pyridoxal 5'-phosphate from ribose 5-phosphate (RBP), glyceraldehyde 3-phosphate (G3P) and ammonia. The ammonia is provided by the PdxT subunit. Can also use ribulose 5-phosphate and dihydroxyacetone phosphate as substrates, resulting from enzyme-catalyzed isomerization of RBP and G3P, respectively. This is Pyridoxal 5'-phosphate synthase subunit PdxS from Haloarcula marismortui (strain ATCC 43049 / DSM 3752 / JCM 8966 / VKM B-1809) (Halobacterium marismortui).